The primary structure comprises 288 residues: MPSPKARSGSGRSGSVPCPGGNGRYEFISLNRTPPSPVPPQLLQRQGSDPTTARLRASESPVRRRGSGSSNSSTGGGGQQLPEEDCMRLNPSFFGIALSSLLAIDLWLSKRLGVCACEDSSWGSVRPLMKLIEVSGHGIPWLAGAAYCLYKSDSPAGQEVMLNLLMALVLDVVLVGVLKAVVRRRRPAHNRMDMFATFSVDSYSFPSGHATRAAMCARFLLNHLVLAAPLRVLVLLWATIVGFSRVLLGRHNVTDVAFGFFMGYWQYNLVEMLWLSPVMLQSAIGQLH.

The tract at residues 1–82 (MPSPKARSGS…STGGGGQQLP (82 aa)) is disordered. The Cytoplasmic portion of the chain corresponds to 1 to 127 (MPSPKARSGS…EDSSWGSVRP (127 aa)). Residues 128–148 (LMKLIEVSGHGIPWLAGAAYC) form a helical membrane-spanning segment. The Lumenal segment spans residues 149–161 (LYKSDSPAGQEVM). A helical transmembrane segment spans residues 162–182 (LNLLMALVLDVVLVGVLKAVV). Residues 179–187 (KAVVRRRRP) form a phosphatase sequence motif I region. Residues 183–223 (RRRRPAHNRMDMFATFSVDSYSFPSGHATRAAMCARFLLNH) are Cytoplasmic-facing. Residues 206–209 (PSGH) form a phosphatase sequence motif II region. The active-site Proton donors is the His209. A helical transmembrane segment spans residues 224 to 244 (LVLAAPLRVLVLLWATIVGFS). A phosphatase sequence motif III region spans residues 244–255 (SRVLLGRHNVTD). Residues 245–255 (RVLLGRHNVTD) lie on the Lumenal side of the membrane. His251 acts as the Nucleophile in catalysis. The chain crosses the membrane as a helical span at residues 256–276 (VAFGFFMGYWQYNLVEMLWLS). Residues 277 to 288 (PVMLQSAIGQLH) are Cytoplasmic-facing.

Belongs to the PA-phosphatase related phosphoesterase family.

The protein localises to the endoplasmic reticulum membrane. Its subcellular location is the nucleus envelope. It is found in the nucleus inner membrane. The catalysed reaction is presqualene diphosphate + H2O = presqualene phosphate + phosphate + H(+). The enzyme catalyses presqualene phosphate + H2O = presqualene alcohol + phosphate. It carries out the reaction (2E,6E)-farnesyl diphosphate + H2O = (2E,6E)-farnesyl phosphate + phosphate + H(+). It catalyses the reaction (2E,6E)-farnesyl phosphate + H2O = (2E,6E)-farnesol + phosphate. The catalysed reaction is (2E,6E,10E)-geranylgeranyl diphosphate + H2O = (2E,6E,10E)-geranylgeranyl phosphate + phosphate + H(+). The enzyme catalyses (2E,6E,10E)-geranylgeranyl phosphate + H2O = (2E,6E,10E)-geranylgeraniol + phosphate. It carries out the reaction (2E)-geranyl diphosphate + H2O = (2E)-geranyl phosphate + phosphate + H(+). It catalyses the reaction (2E)-geranyl phosphate + H2O = (2E)-geraniol + phosphate. The catalysed reaction is 1,2-dihexadecanoyl-sn-glycero-3-phosphate + H2O = 1,2-dihexadecanoyl-sn-glycerol + phosphate. Its function is as follows. Magnesium-independent polyisoprenoid diphosphatase that catalyzes the sequential dephosphorylation of presqualene, farnesyl, geranyl and geranylgeranyl diphosphates. May regulate the biosynthesis of cholesterol and related sterols by dephosphorylating presqualene and farnesyl diphosphate, two key intermediates in this biosynthetic pathway. May also play a role in protein prenylation by acting on farnesyl diphosphate and its derivative geranylgeranyl diphosphate, two precursors for the addition of isoprenoid anchors to membrane proteins. Has a lower activity towards phosphatidic acid (PA), but through phosphatidic acid dephosphorylation may participate in the biosynthesis of phospholipids and triacylglycerols. May also act on ceramide-1-P, lysophosphatidic acid (LPA) and sphing-4-enine 1-phosphate/sphingosine-1-phosphate. This chain is Polyisoprenoid diphosphate/phosphate phosphohydrolase PLPP6 (plpp6), found in Danio rerio (Zebrafish).